Here is a 365-residue protein sequence, read N- to C-terminus: Magnesium-chelatase subunit ChlI homolog (365 aa).

40-47 is an ATP binding site; sequence EKGTAKST. The interval 340 to 365 is disordered; the sequence is FKQQNNKDNEEKEEHKDDDVKKNMMK. Residues 344 to 365 show a composition bias toward basic and acidic residues; it reads NNKDNEEKEEHKDDDVKKNMMK.

The protein belongs to the Mg-chelatase subunits D/I family.

The polypeptide is Magnesium-chelatase subunit ChlI homolog (Methanocaldococcus jannaschii (strain ATCC 43067 / DSM 2661 / JAL-1 / JCM 10045 / NBRC 100440) (Methanococcus jannaschii)).